We begin with the raw amino-acid sequence, 451 residues long: E3 ubiquitin-protein ligase trul-1 (451 aa).

Residues 13–54 (CSICFEDLKQNDKISAIVCGHIYHHGCISQWIATKRQCPSCR) form an RING-type; atypical zinc finger. Coiled-coil stretches lie at residues 96–130 (LKVE…EKDK) and 209–243 (NKDL…DAAI). Disordered stretches follow at residues 270–297 (RDVL…MIDP) and 389–442 (KIPN…SSTS). Residues 427 to 442 (STRISSFFSRTTSSTS) show a composition bias toward low complexity.

This sequence belongs to the TRAIP family.

It is found in the nucleus. The protein resides in the chromosome. The enzyme catalyses S-ubiquitinyl-[E2 ubiquitin-conjugating enzyme]-L-cysteine + [acceptor protein]-L-lysine = [E2 ubiquitin-conjugating enzyme]-L-cysteine + N(6)-ubiquitinyl-[acceptor protein]-L-lysine.. The protein operates within protein modification; protein ubiquitination. Functionally, E3 ubiquitin ligase that acts as a key regulator of DNA repair in response to replication stress. Acts by mediating ubiquitination of the CMG helicase complex, promoting the unloading of the CMG helicase complex by the p97 ATPase (cdc-48.1 or cdc-48.2). The sequence is that of E3 ubiquitin-protein ligase trul-1 from Caenorhabditis elegans.